Reading from the N-terminus, the 233-residue chain is Orotate phosphoribosyltransferase (233 aa).

Lys-29 lines the 5-phospho-alpha-D-ribose 1-diphosphate pocket. 37–38 (FF) serves as a coordination point for orotate. Residues 79-80 (YK), Arg-109, Lys-110, Lys-113, His-115, and 135-143 (DDVITAGTA) each bind 5-phospho-alpha-D-ribose 1-diphosphate. Positions 139 and 167 each coordinate orotate.

Belongs to the purine/pyrimidine phosphoribosyltransferase family. PyrE subfamily. As to quaternary structure, homodimer.

The catalysed reaction is orotidine 5'-phosphate + diphosphate = orotate + 5-phospho-alpha-D-ribose 1-diphosphate. It functions in the pathway pyrimidine metabolism; UMP biosynthesis via de novo pathway; UMP from orotate: step 1/2. Functionally, catalyzes the transfer of a ribosyl phosphate group from 5-phosphoribose 1-diphosphate to orotate, leading to the formation of orotidine monophosphate (OMP). The protein is Orotate phosphoribosyltransferase (ura-5) of Neurospora crassa (strain ATCC 24698 / 74-OR23-1A / CBS 708.71 / DSM 1257 / FGSC 987).